The primary structure comprises 309 residues: tRNA dimethylallyltransferase (309 aa).

Residue 10–17 (GPTAVGKT) participates in ATP binding. 12–17 (TAVGKT) contributes to the substrate binding site. The tract at residues 35-38 (DSMQ) is interaction with substrate tRNA.

This sequence belongs to the IPP transferase family. As to quaternary structure, monomer. Mg(2+) is required as a cofactor.

The enzyme catalyses adenosine(37) in tRNA + dimethylallyl diphosphate = N(6)-dimethylallyladenosine(37) in tRNA + diphosphate. In terms of biological role, catalyzes the transfer of a dimethylallyl group onto the adenine at position 37 in tRNAs that read codons beginning with uridine, leading to the formation of N6-(dimethylallyl)adenosine (i(6)A). The protein is tRNA dimethylallyltransferase of Clostridium beijerinckii (strain ATCC 51743 / NCIMB 8052) (Clostridium acetobutylicum).